Consider the following 636-residue polypeptide: Probable cyclin-dependent serine/threonine-protein kinase DDB_G0278487 (636 aa).

A disordered region spans residues 1-41 (MPSQSNNVITSSTASSSMSSSSNSSDASSTSSSNTNNAHSS). The 280-residue stretch at 64–343 (YEIISKIGEG…AEQALQSPFF (280 aa)) folds into the Protein kinase domain. ATP-binding positions include 70 to 78 (IGEGISGSV) and lysine 93. Aspartate 184 serves as the catalytic Proton acceptor. Disordered regions lie at residues 378 to 408 (EQQK…QKKQ), 473 to 506 (KRQQ…NNSY), 527 to 555 (SETE…DEED), and 579 to 636 (NNQQ…LTIH). Residues 473–485 (KRQQQEHEQRLQR) show a composition bias toward basic and acidic residues. Positions 486–499 (EQQQQLNQLQQQKE) are enriched in low complexity. Positions 529-555 (TESEYESDEEDFYTEEEVEDYSSDEED) are enriched in acidic residues. 2 stretches are compositionally biased toward low complexity: residues 579–594 (NNQQ…QQQQ) and 617–628 (NNNNGNNNNNNN).

Belongs to the protein kinase superfamily. CMGC Ser/Thr protein kinase family. CDC2/CDKX subfamily.

It carries out the reaction L-seryl-[protein] + ATP = O-phospho-L-seryl-[protein] + ADP + H(+). The enzyme catalyses L-threonyl-[protein] + ATP = O-phospho-L-threonyl-[protein] + ADP + H(+). The polypeptide is Probable cyclin-dependent serine/threonine-protein kinase DDB_G0278487 (Dictyostelium discoideum (Social amoeba)).